The primary structure comprises 105 residues: Met repressor (105 aa).

It belongs to the MetJ family. As to quaternary structure, homodimer.

It localises to the cytoplasm. This regulatory protein, when combined with SAM (S-adenosylmethionine) represses the expression of the methionine regulon and of enzymes involved in SAM synthesis. The chain is Met repressor from Haemophilus influenzae (strain PittEE).